The primary structure comprises 74 residues: Small ribosomal subunit protein bS18 (74 aa).

The protein belongs to the bacterial ribosomal protein bS18 family. As to quaternary structure, part of the 30S ribosomal subunit. Forms a tight heterodimer with protein bS6.

In terms of biological role, binds as a heterodimer with protein bS6 to the central domain of the 16S rRNA, where it helps stabilize the platform of the 30S subunit. In Chlorobaculum tepidum (strain ATCC 49652 / DSM 12025 / NBRC 103806 / TLS) (Chlorobium tepidum), this protein is Small ribosomal subunit protein bS18.